The following is a 464-amino-acid chain: Glutamate--tRNA ligase (464 aa).

The 'HIGH' region motif lies at 11 to 21 (PSPTGYLHIGG). Residues 253-257 (KLSKR) carry the 'KMSKS' region motif. Lysine 256 contributes to the ATP binding site.

The protein belongs to the class-I aminoacyl-tRNA synthetase family. Glutamate--tRNA ligase type 1 subfamily. As to quaternary structure, monomer.

Its subcellular location is the cytoplasm. The catalysed reaction is tRNA(Glu) + L-glutamate + ATP = L-glutamyl-tRNA(Glu) + AMP + diphosphate. Functionally, catalyzes the attachment of glutamate to tRNA(Glu) in a two-step reaction: glutamate is first activated by ATP to form Glu-AMP and then transferred to the acceptor end of tRNA(Glu). In Metamycoplasma arthritidis (strain 158L3-1) (Mycoplasma arthritidis), this protein is Glutamate--tRNA ligase.